Reading from the N-terminus, the 208-residue chain is Ribosomal RNA large subunit methyltransferase E (208 aa).

Residues Gly63, Trp65, Asp83, Asp99, and Asp124 each coordinate S-adenosyl-L-methionine. The Proton acceptor role is filled by Lys164.

This sequence belongs to the class I-like SAM-binding methyltransferase superfamily. RNA methyltransferase RlmE family.

Its subcellular location is the cytoplasm. The catalysed reaction is uridine(2552) in 23S rRNA + S-adenosyl-L-methionine = 2'-O-methyluridine(2552) in 23S rRNA + S-adenosyl-L-homocysteine + H(+). Specifically methylates the uridine in position 2552 of 23S rRNA at the 2'-O position of the ribose in the fully assembled 50S ribosomal subunit. The polypeptide is Ribosomal RNA large subunit methyltransferase E (Salmonella paratyphi A (strain ATCC 9150 / SARB42)).